The following is a 459-amino-acid chain: MTGGAMDPLPTAPGAAAAEAEVDEEADPPAADSPVPPVSEPRAPDAGQMQVPPGNPLLLSLTLQELLARDAVQVELVPEKKGLFLKHVEYEVSSQRFKSCVYRRYNDFVVFHETLLHKFPYRMVPALPPKRMLGADREFIEARRRALKRFINLVARHPPFSEDTILKLFLSFSGPDVQNKLKESAQCLGDEFMNCRLAARAKDFLPADIQTQFAMSRELIRNIYNSFHKLRDRAERMVSRAIDNAADLLIFGKELSALGSDTTPLPSWASLNSSTWGSLKQALKGLSVEFALLADKAAQQGKQEENDVVEKLNLFLDLLQSYKDLCERHEKGVLHKHQRALHKYSLMKRQMVSAAVQSREPESMEQLESRIVQQENVIQTMELRSHFSLYCLHQETQLVHVYLPLTSHILGAFVNSQIQGHKEMSKVWNDLQPKLRCLFVGPHGAPAPPRPPQDGLSAH.

The interval 1–53 (MTGGAMDPLPTAPGAAAAEAEVDEEADPPAADSPVPPVSEPRAPDAGQMQVPP) is disordered. In terms of domain architecture, PX spans 68–176 (ARDAVQVELV…KLFLSFSGPD (109 aa)). Positions 104, 130, and 143 each coordinate a 1,2-diacyl-sn-glycero-3-phospho-(1D-myo-inositol-3-phosphate).

Belongs to the sorting nexin family.

The protein resides in the early endosome membrane. May be involved in several stages of intracellular trafficking. May play a role in intracellular protein transport from early endosomes to the trans-Golgi network. The chain is Sorting nexin-8 (SNX8) from Bos taurus (Bovine).